We begin with the raw amino-acid sequence, 82 residues long: Small ribosomal subunit protein bS16 (82 aa).

Belongs to the bacterial ribosomal protein bS16 family.

This is Small ribosomal subunit protein bS16 from Deinococcus geothermalis (strain DSM 11300 / CIP 105573 / AG-3a).